We begin with the raw amino-acid sequence, 314 residues long: tRNA pseudouridine synthase B (314 aa).

Catalysis depends on Asp47, which acts as the Nucleophile.

The protein belongs to the pseudouridine synthase TruB family. Type 1 subfamily.

It catalyses the reaction uridine(55) in tRNA = pseudouridine(55) in tRNA. Responsible for synthesis of pseudouridine from uracil-55 in the psi GC loop of transfer RNAs. In Vibrio vulnificus (strain CMCP6), this protein is tRNA pseudouridine synthase B.